The following is a 150-amino-acid chain: uncharacterized protein (150 aa).

Belongs to the Dps family.

This is an uncharacterized protein from Kitasatospora aureofaciens (Streptomyces aureofaciens).